The primary structure comprises 443 residues: Probable 26S proteasome regulatory subunit 4 (443 aa).

A disordered region spans residues 1–53 (MGQQQSGFGGRGNDRGAGDGEKKEKKKYEAPIPSRIGKKKKGSKGPDAASKLP). Residues 12–29 (GNDRGAGDGEKKEKKKYE) are compositionally biased toward basic and acidic residues. 229–236 (GCPGTGKT) lines the ATP pocket.

Belongs to the AAA ATPase family.

It localises to the cytoplasm. It is found in the nucleus. Functionally, the 26S proteasome is involved in the ATP-dependent degradation of ubiquitinated proteins. The regulatory (or ATPase) complex confers ATP dependency and substrate specificity to the 26S complex. May play a role in the degradation of microtubule severing protein mei-1. The polypeptide is Probable 26S proteasome regulatory subunit 4 (rpt-2) (Caenorhabditis elegans).